A 662-amino-acid polypeptide reads, in one-letter code: MHNMYTREQYLALCKDIEEDDYRYYVLHDPIISDYDYDMKMQKLLSIEAQHPEWRVLWSPSMRLGDRISGSFPVVTHSHPMLSIANAYTLEELNDFFSRVEKTLGYTPTYTLELKIDGIAVAIRYEQRVLVQALSRGNGRQGEDITTNIRTIRSLPLRLPKEAPEFLEVRGEVFFTRATFEQINSIQRQSEKPEFANPRNAAGGTLKLLSAKEAAQRNLELSIYGAWAEENTESHYDNLMLCQKWGFPVFGRPRQYKSVEEVVKALHEIAKIRDQLPMEIDGVVIKVDNTEDQKVLGMTAKHYRWALAYKYAPEQGETILEDILIQVGRTGVLTPVAKLRPVFLSGSKVSRASLYNEEEIERKDIRIGDTVYVEKGGEIIPKVVGVCLEKRPEGTKPWVMPEYCPVCHERVSRESDKVSVRCTNSSCSAGTIEKIRFFVGREALDIEHLGEKVITKLFDLGLIHRRCDIFQITEEDLLQVPGFKDKSIKNVLKSIEKAKSAPLERFIAALGIPYVGIGGANALAQHFLSLDAVMSASLEELKVIDGIGSKVAESIVDYFHQSDNVEEIQKMLSLGVNVLPYSRASASCQGKTFVITGSLEKMTRSEAEASIRNCGGKVGSSVSKSINYLVVGKDPGSKLKKAQELQIPILNESDLLKILYPN.

NAD(+) is bound by residues 34-38 (DYDYD), 83-84 (SI), and Glu-113. Lys-115 (N6-AMP-lysine intermediate) is an active-site residue. Residues Arg-136, Glu-172, Lys-286, and Lys-310 each coordinate NAD(+). Residues Cys-404, Cys-407, Cys-422, and Cys-427 each coordinate Zn(2+). In terms of domain architecture, BRCT spans 583–662 (RASASCQGKT…SDLLKILYPN (80 aa)).

This sequence belongs to the NAD-dependent DNA ligase family. LigA subfamily. Requires Mg(2+) as cofactor. Mn(2+) is required as a cofactor.

The catalysed reaction is NAD(+) + (deoxyribonucleotide)n-3'-hydroxyl + 5'-phospho-(deoxyribonucleotide)m = (deoxyribonucleotide)n+m + AMP + beta-nicotinamide D-nucleotide.. DNA ligase that catalyzes the formation of phosphodiester linkages between 5'-phosphoryl and 3'-hydroxyl groups in double-stranded DNA using NAD as a coenzyme and as the energy source for the reaction. It is essential for DNA replication and repair of damaged DNA. In Chlamydia felis (strain Fe/C-56) (Chlamydophila felis), this protein is DNA ligase.